The primary structure comprises 490 residues: MVSDVSGYTGSLSHVTFKLYNTATHGIETFKPLREGQVSIYHCGMTVQSSPHLGHIRKEVVFDVLRRWLECSGYRVTVVANVTDIDDKILAKSAAAGTPWWAHAYHYENELHAAYKALGCRPPTYEPRATGHIPEMIELVKTLIEKGHAYPAPDGSGDVYFDVRSWPRYGELSGIRVDEMSPAEDSDPRGKRDPRDFALWKGHKEDEPETASWVSPWGRGRPGWHLECSAMSGKYLGEAFDIHGGGIDLRFPHHENELAQSAAAGRPFAHYWMHNAWVTMSGEKMSKSLGNTAQVSEVTKTYSPRAVRYFLLAPHYRSMIEFSPSDEGTMGSLDEATKAIERIDSFLDRASNLVGEQVTASHELSEAFVTAMDDDLGTPQAVAALFSQITEGNKSVSIGDAEATRHHLSQVKAMLAVFGLDPQAPEWADVAGSDDRLEPVVDGLVHAMLEQRAEARARKDWATADAIRDTLTNLGLTIEDTPAGAHWSLS.

Residue C43 participates in Zn(2+) binding. The short motif at 45 to 55 (MTVQSSPHLGH) is the 'HIGH' region element. The segment at 177–204 (VDEMSPAEDSDPRGKRDPRDFALWKGHK) is disordered. The segment covering 186–204 (SDPRGKRDPRDFALWKGHK) has biased composition (basic and acidic residues). Positions 228, 253, and 257 each coordinate Zn(2+). The 'KMSKS' region motif lies at 284-288 (KMSKS). ATP is bound at residue K287.

Belongs to the class-I aminoacyl-tRNA synthetase family. As to quaternary structure, monomer. Zn(2+) serves as cofactor.

It localises to the cytoplasm. The enzyme catalyses tRNA(Cys) + L-cysteine + ATP = L-cysteinyl-tRNA(Cys) + AMP + diphosphate. The sequence is that of Cysteine--tRNA ligase from Cutibacterium acnes (strain DSM 16379 / KPA171202) (Propionibacterium acnes).